We begin with the raw amino-acid sequence, 539 residues long: Glutamate/serine transporter AimA (539 aa).

13 helical membrane passes run 11-31 (FSLM…FGAW), 36-56 (IAGP…LFIA), 82-102 (SFIG…VIPV), 137-157 (AFAS…VNLF), 164-184 (ITIF…FVGF), 199-219 (GWAS…FNGF), 238-258 (IAVV…QIAF), 283-303 (LAIA…AFVS), 350-370 (LIVS…AEII), 401-421 (LKGL…VLYW), 424-444 (WPLT…YFYY), 457-477 (FKAG…SYLG), and 486-506 (VIHY…FYVW).

The protein belongs to the amino acid-polyamine-organocation (APC) superfamily. AGT (TC 2.A.3.11) family.

Its subcellular location is the cell membrane. Major glutamate and serine transporter. Cannot transport threonine. AimA is the major glutamate transporter under standard growth conditions when glutamate is not limiting in the medium. The protein is Glutamate/serine transporter AimA of Bacillus subtilis (strain 168).